The chain runs to 223 residues: Small ribosomal subunit protein uS3 (223 aa).

Residues V39 to R107 form the KH type-2 domain.

This sequence belongs to the universal ribosomal protein uS3 family. As to quaternary structure, part of the 30S ribosomal subunit. Forms a tight complex with proteins S10 and S14.

In terms of biological role, binds the lower part of the 30S subunit head. Binds mRNA in the 70S ribosome, positioning it for translation. In Francisella tularensis subsp. holarctica (strain FTNF002-00 / FTA), this protein is Small ribosomal subunit protein uS3.